The chain runs to 774 residues: MTPRPSSSGPDPRKTTGKKPAGKTPTGKKPAKAAKKKAPRRTTASANASATTSVSGAEVAVSPAPDAADRERLLAGTHHDPHAVLGAHRVPGGVAFRVFRPYALAVTVLSGELRVGLHDDGDGFFSGLVPLKDVPAHRLLVAYEGTEQEVEDPYRFLPTLGELDLHLLGEGRHEQLWRALGAHPTTHEGVAGTRFAVWAPNARGVRVAGGFNFWDGTGHPMRSLGSTGVWELFLPGVGAGELYKFEITRPDGSRTFRADPLARRTEVPPATSSVVHASDYTWGDEEWLAHRADAPAHEAPMSVYEVHLPSWRPGLTYRQLAEQLPAYVADLGFTHVELMPVAEHPFGGSWGYQVTGFYAPTARLGDPDDFKYLVDRLHRAGIGVLMDWVPAHFPRDDWALAEFDGRPLYEHSDPLRAAHPDWGTLEFDFGRREVRNFLVANAVYWCEEFHIDGLRVDAVASMLYLDYSREPGEWEPNEHGGRENLDAVAFLQEMNATLYRRVPGVVTVAEESTAWDGVTRATHHEGPSGFGGLGFGLKWNMGWMHDSLDYMSHEPVHRKHHHGEMTFSMVYAYSENYVLPISHDEVVHGKRSLVSKMPGDWWQQRANERAYLGFMWAHPGKQLLFMGQEFAQGAEWSEAHGPDWWLLDPEYGASADHRGVRDLVRDLNTVYRATPALWRRDTHPSGFSWVVGDAAEDNVLAFLRLDADGTPLLAVSNFAPVVRSGYRLGVPDEVPAWHEVLNTDAARYGGGDVVNPDPVKPEPQGGTAARRASG.

The interval 1–66 (MTPRPSSSGP…AEVAVSPAPD (66 aa)) is disordered. Basic residues predominate over residues 29–40 (KPAKAAKKKAPR). Residues 41 to 55 (RTTASANASATTSVS) are compositionally biased toward low complexity. The Nucleophile role is filled by aspartate 457. Glutamate 510 serves as the catalytic Proton donor. Residues 748 to 774 (YGGGDVVNPDPVKPEPQGGTAARRASG) are disordered.

This sequence belongs to the glycosyl hydrolase 13 family. GlgB subfamily. Monomer.

The enzyme catalyses Transfers a segment of a (1-&gt;4)-alpha-D-glucan chain to a primary hydroxy group in a similar glucan chain.. The protein operates within glycan biosynthesis; glycogen biosynthesis. Functionally, catalyzes the formation of the alpha-1,6-glucosidic linkages in glycogen by scission of a 1,4-alpha-linked oligosaccharide from growing alpha-1,4-glucan chains and the subsequent attachment of the oligosaccharide to the alpha-1,6 position. In Streptomyces coelicolor (strain ATCC BAA-471 / A3(2) / M145), this protein is 1,4-alpha-glucan branching enzyme GlgB 1 (glgB1).